We begin with the raw amino-acid sequence, 517 residues long: Amidophosphoribosyltransferase (517 aa).

An N-acetylmethionine modification is found at M1. The propeptide occupies 1-11; the sequence is MELEELGIREE. The active-site Nucleophile is the C12. In terms of domain architecture, Glutamine amidotransferase type-2 spans 12-261; it reads CGVFGCIASG…PGEIVEISRH (250 aa). C280 contributes to the [4Fe-4S] cluster binding site. S327, D389, and D390 together coordinate Mg(2+). C426, C503, and C506 together coordinate [4Fe-4S] cluster.

In the C-terminal section; belongs to the purine/pyrimidine phosphoribosyltransferase family. In terms of assembly, homotetramer. Requires Mg(2+) as cofactor. [4Fe-4S] cluster serves as cofactor. As to expression, ubiquitously expressed.

The enzyme catalyses 5-phospho-beta-D-ribosylamine + L-glutamate + diphosphate = 5-phospho-alpha-D-ribose 1-diphosphate + L-glutamine + H2O. Its pathway is purine metabolism; IMP biosynthesis via de novo pathway; N(1)-(5-phospho-D-ribosyl)glycinamide from 5-phospho-alpha-D-ribose 1-diphosphate: step 1/2. In terms of biological role, catalyzes the formation of phosphoribosylamine from phosphoribosylpyrophosphate (PRPP) and glutamine. This is Amidophosphoribosyltransferase (PPAT) from Homo sapiens (Human).